We begin with the raw amino-acid sequence, 223 residues long: HTH-type transcriptional dual regulator CecR (223 aa).

Residues 11–70 (EQAKKQLIAAALAQFGEYGMNATTREIAAQAGQNIAAITYYFGSKEDLYLACAQWIADFI) enclose the HTH tetR-type domain. A DNA-binding region (H-T-H motif) is located at residues 33-52 (TTREIAAQAGQNIAAITYYF).

The protein localises to the cytoplasm. Functionally, regulates transcription of the cecR-ybhGFSR operon and the rhlE gene, which altogether are involved in the control of sensitivity to cefoperazone and chloramphenicol. Represses the cecR-ybhGFSR operon and activates the rhlE operon. Acts by binding to a palindromic sequence within the intergenic spacer located between these two divergently transcribed operons. In Shigella flexneri, this protein is HTH-type transcriptional dual regulator CecR.